A 176-amino-acid polypeptide reads, in one-letter code: Oxaleimides biosynthesis cluster protein N (176 aa).

4 consecutive transmembrane segments (helical) span residues 5 to 25 (LLVV…PLIT), 71 to 91 (VWTG…LNLF), 104 to 124 (FLYG…PKML), and 155 to 175 (FWIV…EGLK).

The protein localises to the membrane. Its pathway is secondary metabolite biosynthesis. Part of the gene cluster that mediates the biosynthesis of oxaleimides, cytotoxic compounds containing an unusual disubstituted succinimide moiety. The first step of the pathway is provided by the HR-PKS poxF that serves in a new mode of collaborative biosynthesis with the PKS-NRPS poxE, by providing the olefin containing amino acid substrate via the synthesis of an ACP-bound dec-4-enoate. The cytochrome P450 monooxygenase poxM-catalyzed oxidation at the alpha-position creates the enzyme-bound 2-hydroxydec-4-enoyl-ACP thioester, which may be prone to spontaneous hydrolysis to yield 2-hydroxydec-4-enoic acid due to increased electrophilicity of the carbonyl. 2-hydroxydec-4-enoic acid can then be further oxidized by poxM to yield the alpha-ketoacid 2-oxodec-4-enoicacid, which is reductively aminated by the aminotransferase poxL to yield (S,E)-2-aminodec-4-enoic acid. The Hybrid PKS-NRPS synthetase poxE then performs condensation between the octaketide product of its PKS modules and the amino group of (S,E)-2-aminodec-4-enoic acid which is activated and incorporated by the adenylation domain. The resulting aminoacyl product can be cyclized by the Diels-Alderase PoxQ and reductively released by the reductive (R) domain of poxE to yield an aldehyde intermediate. The released aldehyde is then substrate for a Knoevenagel condensation by the hydrolyase poxO followed by an oxidation at the 5-position of the pyrrolidone ring. The presence of the olefin from the amino acid building block allows for migration of the substituted allyl group to occur. This allylic transposition reaction takes place in a conjugate addition, semipinacol-like fashion to yield a succinimide intermediate. Iterative two-electron oxidations of the C7 methyl of the succinimide intermediate to the carboxylic acid can be catalyzed by one of two remaining cytochrome P450 monooxygenasess poxC or poxD to yield oxaleimide A. Subsequent oxidation yields the maleimide scaffold oxaleimide I. Both oxaleimide A and oxaleimide I can undergo oxidative modifications in the decalin ring to yield the series of products oxaleimides B to H. The chain is Oxaleimides biosynthesis cluster protein N from Penicillium oxalicum (strain 114-2 / CGMCC 5302) (Penicillium decumbens).